The chain runs to 304 residues: Glutaminase (304 aa).

Substrate contacts are provided by S63, N114, E158, N165, Y189, Y240, and V258.

Belongs to the glutaminase family. As to quaternary structure, homotetramer.

The catalysed reaction is L-glutamine + H2O = L-glutamate + NH4(+). This Shewanella amazonensis (strain ATCC BAA-1098 / SB2B) protein is Glutaminase.